The chain runs to 267 residues: Zinc finger protein ZAT1 (267 aa).

Residues 5 to 27 (HKCKLCWKSFANGRALGGHMRSH) form a C2H2-type 1 zinc finger. 2 disordered regions span residues 34 to 99 (PSQP…ADIK) and 181 to 204 (SHKKKIAETDQLGSDELKKKKKKS). A compositionally biased stretch (basic and acidic residues) spans 52–62 (QDRESETESSK). The segment covering 63 to 73 (KPSRKRSRLNR) has biased composition (basic residues). A compositionally biased stretch (basic and acidic residues) spans 83 to 97 (QSNEEGKSETARAAD). 2 consecutive C2H2-type zinc fingers follow at residues 160–182 (FECETCEKVFKSYQALGGHRASH) and 209–231 (HECPICAKVFTSGQALGGHKRSH).

It is found in the nucleus. In terms of biological role, probable transcription factor that may be involved in stress responses. The chain is Zinc finger protein ZAT1 (ZAT1) from Arabidopsis thaliana (Mouse-ear cress).